Here is a 527-residue protein sequence, read N- to C-terminus: Formate--tetrahydrofolate ligase (527 aa).

53–60 is an ATP binding site; the sequence is TSSGEGKT.

Belongs to the formate--tetrahydrofolate ligase family.

The enzyme catalyses (6S)-5,6,7,8-tetrahydrofolate + formate + ATP = (6R)-10-formyltetrahydrofolate + ADP + phosphate. Its pathway is one-carbon metabolism; tetrahydrofolate interconversion. This chain is Formate--tetrahydrofolate ligase, found in Acholeplasma laidlawii (strain PG-8A).